The primary structure comprises 244 residues: Type III pantothenate kinase (244 aa).

6–13 (DVGNTRIK) is an ATP binding site. Substrate-binding positions include Tyr87 and 94–97 (GIDR). Asp96 (proton acceptor) is an active-site residue. Asp117 lines the K(+) pocket. Thr120 is an ATP binding site. Thr172 contacts substrate.

Belongs to the type III pantothenate kinase family. In terms of assembly, homodimer. It depends on NH4(+) as a cofactor. Requires K(+) as cofactor.

The protein resides in the cytoplasm. The catalysed reaction is (R)-pantothenate + ATP = (R)-4'-phosphopantothenate + ADP + H(+). It functions in the pathway cofactor biosynthesis; coenzyme A biosynthesis; CoA from (R)-pantothenate: step 1/5. Functionally, catalyzes the phosphorylation of pantothenate (Pan), the first step in CoA biosynthesis. This chain is Type III pantothenate kinase, found in Flavobacterium johnsoniae (strain ATCC 17061 / DSM 2064 / JCM 8514 / BCRC 14874 / CCUG 350202 / NBRC 14942 / NCIMB 11054 / UW101) (Cytophaga johnsonae).